A 365-amino-acid chain; its full sequence is Anhydro-N-acetylmuramic acid kinase (365 aa).

12–19 (GTSMDGMD) is an ATP binding site.

It belongs to the anhydro-N-acetylmuramic acid kinase family.

The catalysed reaction is 1,6-anhydro-N-acetyl-beta-muramate + ATP + H2O = N-acetyl-D-muramate 6-phosphate + ADP + H(+). It functions in the pathway amino-sugar metabolism; 1,6-anhydro-N-acetylmuramate degradation. Its pathway is cell wall biogenesis; peptidoglycan recycling. Functionally, catalyzes the specific phosphorylation of 1,6-anhydro-N-acetylmuramic acid (anhMurNAc) with the simultaneous cleavage of the 1,6-anhydro ring, generating MurNAc-6-P. Is required for the utilization of anhMurNAc either imported from the medium or derived from its own cell wall murein, and thus plays a role in cell wall recycling. The polypeptide is Anhydro-N-acetylmuramic acid kinase (Pseudomonas paraeruginosa (strain DSM 24068 / PA7) (Pseudomonas aeruginosa (strain PA7))).